A 176-amino-acid chain; its full sequence is Adenylyl-sulfate kinase (176 aa).

12 to 19 is a binding site for ATP; sequence GLSGAGKS. The active-site Phosphoserine intermediate is the Ser86.

The protein belongs to the APS kinase family.

The catalysed reaction is adenosine 5'-phosphosulfate + ATP = 3'-phosphoadenylyl sulfate + ADP + H(+). It participates in sulfur metabolism; hydrogen sulfide biosynthesis; sulfite from sulfate: step 2/3. Functionally, catalyzes the synthesis of activated sulfate. The protein is Adenylyl-sulfate kinase of Gloeothece citriformis (strain PCC 7424) (Cyanothece sp. (strain PCC 7424)).